Consider the following 384-residue polypeptide: S-adenosylmethionine synthase (384 aa).

ATP is bound at residue H15. D17 lines the Mg(2+) pocket. E43 contributes to the K(+) binding site. The L-methionine site is built by E56 and Q99. Positions 99–109 are flexible loop; sequence QSPDINQGVDR. ATP contacts are provided by residues 164–166, 231–232, D240, 246–247, A263, and K267; these read DAK, RF, and RK. D240 contributes to the L-methionine binding site. An L-methionine-binding site is contributed by K271.

It belongs to the AdoMet synthase family. Homotetramer; dimer of dimers. It depends on Mg(2+) as a cofactor. K(+) serves as cofactor.

The protein resides in the cytoplasm. It carries out the reaction L-methionine + ATP + H2O = S-adenosyl-L-methionine + phosphate + diphosphate. The protein operates within amino-acid biosynthesis; S-adenosyl-L-methionine biosynthesis; S-adenosyl-L-methionine from L-methionine: step 1/1. Catalyzes the formation of S-adenosylmethionine (AdoMet) from methionine and ATP. The overall synthetic reaction is composed of two sequential steps, AdoMet formation and the subsequent tripolyphosphate hydrolysis which occurs prior to release of AdoMet from the enzyme. The polypeptide is S-adenosylmethionine synthase (Shewanella pealeana (strain ATCC 700345 / ANG-SQ1)).